Reading from the N-terminus, the 145-residue chain is Immune protein Tsi3 (145 aa).

A signal peptide spans 1-15 (MKTVALILASLALLA). Cys-16 carries the N-palmitoyl cysteine lipid modification. Cys-16 carries the S-diacylglycerol cysteine lipid modification. The segment at 53–85 (FDEGGKLRNPRQLEVQRQDAPPPPDLASRRLGD) is disordered. Glu-126 contributes to the Ca(2+) binding site.

As to quaternary structure, forms a heterotetramer with Tse3 consisting of two Tse3 dimers and two Tsi3 dimers. Formation of the complex inactivates Tse3 enzymatic activity.

Immunity protein that plays a role in preventing early activation of toxin Tse3. Occupies Tse3 substrate binding site and prevents the substrate from entering. This chain is Immune protein Tsi3, found in Pseudomonas aeruginosa (strain ATCC 15692 / DSM 22644 / CIP 104116 / JCM 14847 / LMG 12228 / 1C / PRS 101 / PAO1).